Here is a 1141-residue protein sequence, read N- to C-terminus: cGMP-inhibited 3',5'-cyclic phosphodiesterase 3A (1141 aa).

The disordered stretch occupies residues 1–42 (MAVRGEAAQDLAKPGLGGASPARVARGNHRHRGESSPSPRGS). The helical transmembrane segment at 62–82 (SALCAGSLSVLLALLVRLVGG) threads the bilayer. A disordered region spans residues 90-111 (KSQEAAAEEEEEEGARGGVFPG). 5 helical membrane passes run 127–147 (LQPA…GLCL), 157–177 (AVAL…SLGV), 182–202 (LLSL…TWLV), 207–227 (LGVL…VSLE), and 229–249 (FKVA…LLLA). Phosphoserine is present on serine 310. Positions 433–445 (RVSSTWTTTTSAT) are enriched in low complexity. A disordered region spans residues 433-483 (RVSSTWTTTTSATGLPTLEPAPVRRDRSASIKPHEAPSPSAVNPDSWNAPG). The segment covering 454 to 467 (PVRRDRSASIKPHE) has biased composition (basic and acidic residues). Polar residues predominate over residues 472 to 483 (SAVNPDSWNAPG). Phosphoserine is present on residues serine 492, serine 520, serine 524, and serine 533. The tract at residues 505–654 (VKAKKQNRPG…CQREPQRKAS (150 aa)) is disordered. Positions 522–532 (VPSPSSSPPQG) are enriched in pro residues. A compositionally biased stretch (low complexity) spans 533–544 (SPASSPVSNSAS). A compositionally biased stretch (polar residues) spans 618–637 (TSQVTSDYETNNNSDSSDIL). Residues 669–1141 (KPILAPEPLV…EETLAPQPDL (473 aa)) form an interaction with SLFN12 region. In terms of domain architecture, PDEase spans 674–1093 (PEPLVMDNLD…MMWKKVIEEE (420 aa)). The active-site Proton donor is histidine 752. Histidine 752 lines the AMP pocket. Residues histidine 756, histidine 836, aspartate 837, and aspartate 950 each contribute to the Mn(2+) site. Aspartate 837, aspartate 950, and glutamine 1001 together coordinate AMP. Mg(2+) is bound at residue aspartate 837. 2 disordered regions span residues 1024–1060 (GKWV…SSIA) and 1120–1141 (KEEE…QPDL). Positions 1029–1046 (DSDDSGDTDDPEEEEEEA) are enriched in acidic residues. Residue serine 1033 is modified to Phosphoserine. At threonine 1036 the chain carries Phosphothreonine. Residue lysine 1120 forms a Glycyl lysine isopeptide (Lys-Gly) (interchain with G-Cter in SUMO2) linkage.

It belongs to the cyclic nucleotide phosphodiesterase family. PDE3 subfamily. Mn(2+) serves as cofactor. Requires Mg(2+) as cofactor.

It localises to the membrane. The protein localises to the cytoplasm. It is found in the cytosol. It carries out the reaction a nucleoside 3',5'-cyclic phosphate + H2O = a nucleoside 5'-phosphate + H(+). The enzyme catalyses 3',5'-cyclic AMP + H2O = AMP + H(+). It catalyses the reaction 3',5'-cyclic GMP + H2O = GMP + H(+). The catalysed reaction is 3',5'-cyclic UMP + H2O = UMP + H(+). Inhibited by cGMP. Cyclic nucleotide phosphodiesterase with specificity for the second messengers cAMP and cGMP, which are key regulators of many important physiological processes. Also has activity toward cUMP. Independently of its catalytic activity it is part of an E2/17beta-estradiol-induced pro-apoptotic signaling pathway. E2 stabilizes the PDE3A/SLFN12 complex in the cytosol, promoting the dephosphorylation of SLFN12 and activating its pro-apoptotic ribosomal RNA/rRNA ribonuclease activity. This apoptotic pathway might be relevant in tissues with high concentration of E2 and be for instance involved in placenta remodeling. This chain is cGMP-inhibited 3',5'-cyclic phosphodiesterase 3A, found in Mus musculus (Mouse).